A 453-amino-acid polypeptide reads, in one-letter code: UDP-glycosyltransferase 79B6 (453 aa).

Residues S266, 325–327 (VQQ), 342–350 (HCGFGSMWE), and 364–367 (LGEQ) each bind UDP-alpha-D-glucose.

Belongs to the UDP-glycosyltransferase family.

The protein is UDP-glycosyltransferase 79B6 (UGT79B6) of Arabidopsis thaliana (Mouse-ear cress).